The chain runs to 294 residues: Bifunctional protein FolD 1 (294 aa).

NADP(+) is bound by residues Gly165–Ser167, Ser190, and Thr231.

It belongs to the tetrahydrofolate dehydrogenase/cyclohydrolase family. In terms of assembly, homodimer.

It carries out the reaction (6R)-5,10-methylene-5,6,7,8-tetrahydrofolate + NADP(+) = (6R)-5,10-methenyltetrahydrofolate + NADPH. The catalysed reaction is (6R)-5,10-methenyltetrahydrofolate + H2O = (6R)-10-formyltetrahydrofolate + H(+). Its pathway is one-carbon metabolism; tetrahydrofolate interconversion. Catalyzes the oxidation of 5,10-methylenetetrahydrofolate to 5,10-methenyltetrahydrofolate and then the hydrolysis of 5,10-methenyltetrahydrofolate to 10-formyltetrahydrofolate. This chain is Bifunctional protein FolD 1, found in Paenarthrobacter aurescens (strain TC1).